The primary structure comprises 331 residues: MKFQSTLLLAAAAGSALAVPHGSGHKKRASVFEWFGSNESGAEFGTNIPGVWGTDYIFPDPSTISTLIGKGMNFFRVQFMMERLLPDSMTGSYDEEYLANLTTVVKAVTDGGAHALIDPHNYGRYNGEIISSTSDFQTFWQNLAGQYKDNDLVMFDTNNEYYDMDQDLVLNLNQAAINGIRAAGASQYIFVEGNSWTGAWTWVDVNDNMKNLTDPEDKIVYEMHQYLDSDGSGTSETCVSGTIGKERITDATQWLKDNKKVGFIGEYAGGSNDVCRSAVSGMLEYMANNTDVWKGASWWAAGPWWGDYIFSLEPPDGTAYTGMLDILETYL.

The N-terminal stretch at 1-18 (MKFQSTLLLAAAAGSALA) is a signal peptide. Residues asparagine 38 and asparagine 100 are each glycosylated (N-linked (GlcNAc...) asparagine). Catalysis depends on glutamate 160, which acts as the Proton donor. Asparagine 211 carries an N-linked (GlcNAc...) asparagine glycan. The active-site Nucleophile is the glutamate 266. N-linked (GlcNAc...) asparagine glycosylation occurs at asparagine 288.

This sequence belongs to the glycosyl hydrolase 5 (cellulase A) family.

Its subcellular location is the secreted. The catalysed reaction is Endohydrolysis of (1-&gt;4)-beta-D-glucosidic linkages in cellulose, lichenin and cereal beta-D-glucans.. Its function is as follows. Has endoglucanase activity on substrates containing beta-1,4 glycosidic bonds, like in carboxymethylcellulose (CMC), hydroxyethylcellulose (HEC) and beta-glucan. Involved in the degradation of complex natural cellulosic substrates. This Aspergillus niger (strain ATCC MYA-4892 / CBS 513.88 / FGSC A1513) protein is Probable endo-beta-1,4-glucanase B (eglB).